A 413-amino-acid chain; its full sequence is Serine hydroxymethyltransferase (413 aa).

Residues L117 and 121–123 (GHL) contribute to the (6S)-5,6,7,8-tetrahydrofolate site. K226 carries the post-translational modification N6-(pyridoxal phosphate)lysine. (6S)-5,6,7,8-tetrahydrofolate-binding positions include E239 and 349–351 (SPF).

This sequence belongs to the SHMT family. Homodimer. Pyridoxal 5'-phosphate serves as cofactor.

The protein resides in the cytoplasm. The enzyme catalyses (6R)-5,10-methylene-5,6,7,8-tetrahydrofolate + glycine + H2O = (6S)-5,6,7,8-tetrahydrofolate + L-serine. It functions in the pathway one-carbon metabolism; tetrahydrofolate interconversion. It participates in amino-acid biosynthesis; glycine biosynthesis; glycine from L-serine: step 1/1. Catalyzes the reversible interconversion of serine and glycine with tetrahydrofolate (THF) serving as the one-carbon carrier. This reaction serves as the major source of one-carbon groups required for the biosynthesis of purines, thymidylate, methionine, and other important biomolecules. Also exhibits THF-independent aldolase activity toward beta-hydroxyamino acids, producing glycine and aldehydes, via a retro-aldol mechanism. This chain is Serine hydroxymethyltransferase, found in Bacillus cereus (strain AH820).